The following is a 449-amino-acid chain: UDP-N-acetylglucosamine 1-carboxyvinyltransferase (449 aa).

Position 51 to 52 (51 to 52 (KN)) interacts with phosphoenolpyruvate. Arginine 121 lines the UDP-N-acetyl-alpha-D-glucosamine pocket. Cysteine 145 functions as the Proton donor in the catalytic mechanism. Cysteine 145 is modified (2-(S-cysteinyl)pyruvic acid O-phosphothioketal). UDP-N-acetyl-alpha-D-glucosamine-binding positions include 150–154 (RPVDQ), aspartate 333, and isoleucine 355.

This sequence belongs to the EPSP synthase family. MurA subfamily.

The protein localises to the cytoplasm. The enzyme catalyses phosphoenolpyruvate + UDP-N-acetyl-alpha-D-glucosamine = UDP-N-acetyl-3-O-(1-carboxyvinyl)-alpha-D-glucosamine + phosphate. The protein operates within cell wall biogenesis; peptidoglycan biosynthesis. In terms of biological role, cell wall formation. Adds enolpyruvyl to UDP-N-acetylglucosamine. This Burkholderia mallei (strain ATCC 23344) protein is UDP-N-acetylglucosamine 1-carboxyvinyltransferase.